Consider the following 514-residue polypeptide: Beta-galactoside alpha-2,6-sialyltransferase 2 (514 aa).

Topologically, residues 1-10 (MKSSLKQWRR) are cytoplasmic. Residues 11–31 (LALGLILVWALLFLALLSYFM) form a helical; Signal-anchor for type II membrane protein membrane-spanning segment. At 32–514 (ESRVDDPHAA…PGFNKVHCEP (483 aa)) the chain is on the lumenal side. Low complexity predominate over residues 70–92 (ATSSAPSTSSNTQQEQSQEENPS). Residues 70-183 (ATSSAPSTSS…TKRVARHGSS (114 aa)) form a disordered region. Residues 119–132 (FGTQDVGSRSTGVS) are compositionally biased toward polar residues. Residues 145 to 166 (PQEDEDEEEEVIGGEEEDEEGG) are compositionally biased toward acidic residues. Disulfide bonds link Cys246-Cys512, Cys289-Cys441, and Cys459-Cys470. Residues Asn330, Asn350, and Asn357 are each glycosylated (N-linked (GlcNAc...) asparagine).

Belongs to the glycosyltransferase 29 family.

It localises to the golgi apparatus. The protein resides in the golgi stack membrane. It catalyses the reaction a beta-D-galactoside + CMP-N-acetyl-beta-neuraminate = an N-acetyl-alpha-neuraminyl-(2-&gt;6)-beta-D-galactosyl derivative + CMP + H(+). Its function is as follows. Transfers sialic acid from the donor of substrate CMP-sialic acid to galactose containing acceptor substrates. This chain is Beta-galactoside alpha-2,6-sialyltransferase 2 (st6gal2), found in Danio rerio (Zebrafish).